The chain runs to 198 residues: Holliday junction branch migration complex subunit RuvA (198 aa).

A domain I region spans residues 1-64 (MYEYIKGKYI…EDFIGLYGFD (64 aa)). The segment at 65 to 143 (SKEELEMFKL…PDELVDSSLE (79 aa)) is domain II. The tract at residues 144-149 (IDTKDN) is flexible linker. The domain III stretch occupies residues 150 to 198 (ENVMALSEALSALIALGYSEKEAESVLKKIDKNDSVENIIKNALKALMG).

Belongs to the RuvA family. Homotetramer. Forms an RuvA(8)-RuvB(12)-Holliday junction (HJ) complex. HJ DNA is sandwiched between 2 RuvA tetramers; dsDNA enters through RuvA and exits via RuvB. An RuvB hexamer assembles on each DNA strand where it exits the tetramer. Each RuvB hexamer is contacted by two RuvA subunits (via domain III) on 2 adjacent RuvB subunits; this complex drives branch migration. In the full resolvosome a probable DNA-RuvA(4)-RuvB(12)-RuvC(2) complex forms which resolves the HJ.

It is found in the cytoplasm. In terms of biological role, the RuvA-RuvB-RuvC complex processes Holliday junction (HJ) DNA during genetic recombination and DNA repair, while the RuvA-RuvB complex plays an important role in the rescue of blocked DNA replication forks via replication fork reversal (RFR). RuvA specifically binds to HJ cruciform DNA, conferring on it an open structure. The RuvB hexamer acts as an ATP-dependent pump, pulling dsDNA into and through the RuvAB complex. HJ branch migration allows RuvC to scan DNA until it finds its consensus sequence, where it cleaves and resolves the cruciform DNA. This is Holliday junction branch migration complex subunit RuvA from Clostridium beijerinckii (strain ATCC 51743 / NCIMB 8052) (Clostridium acetobutylicum).